The chain runs to 506 residues: NAD(P)H-quinone oxidoreductase subunit 2 (506 aa).

The next 13 membrane-spanning stretches (helical) occupy residues Ala-14 to Ala-34, Trp-42 to Trp-62, Leu-79 to Trp-99, Pro-108 to Gly-128, Leu-132 to Tyr-152, Leu-167 to Leu-187, Phe-206 to Val-226, Pro-240 to Ile-260, Leu-276 to Gln-296, Met-302 to Thr-322, Val-330 to Phe-350, Leu-374 to Gly-394, and Leu-409 to Ile-429.

The protein belongs to the complex I subunit 2 family. In terms of assembly, NDH-1 can be composed of about 15 different subunits; different subcomplexes with different compositions have been identified which probably have different functions.

It localises to the cellular thylakoid membrane. The catalysed reaction is a plastoquinone + NADH + (n+1) H(+)(in) = a plastoquinol + NAD(+) + n H(+)(out). It carries out the reaction a plastoquinone + NADPH + (n+1) H(+)(in) = a plastoquinol + NADP(+) + n H(+)(out). Functionally, NDH-1 shuttles electrons from an unknown electron donor, via FMN and iron-sulfur (Fe-S) centers, to quinones in the respiratory and/or the photosynthetic chain. The immediate electron acceptor for the enzyme in this species is believed to be plastoquinone. Couples the redox reaction to proton translocation, and thus conserves the redox energy in a proton gradient. Cyanobacterial NDH-1 also plays a role in inorganic carbon-concentration. This Prochlorococcus marinus (strain AS9601) protein is NAD(P)H-quinone oxidoreductase subunit 2.